A 557-amino-acid polypeptide reads, in one-letter code: Potassium-transporting ATPase potassium-binding subunit (557 aa).

A run of 12 helical transmembrane segments spans residues 5 to 25, 63 to 83, 132 to 152, 170 to 190, 253 to 273, 283 to 303, 329 to 349, 356 to 376, 379 to 399, 416 to 436, 484 to 504, and 526 to 546; these read GFLL…PLGS, LSAI…MLLG, GLTV…FALI, LLRI…LFFI, FVQM…FGEV, LLWA…WAEV, VLVS…AVIA, ALGG…FGGV, GLYG…LMIG, LTAL…ALAM, LLAL…MAIA, and LFVG…FIPA.

This sequence belongs to the KdpA family. As to quaternary structure, the system is composed of three essential subunits: KdpA, KdpB and KdpC.

It is found in the cell inner membrane. Its function is as follows. Part of the high-affinity ATP-driven potassium transport (or Kdp) system, which catalyzes the hydrolysis of ATP coupled with the electrogenic transport of potassium into the cytoplasm. This subunit binds the periplasmic potassium ions and delivers the ions to the membrane domain of KdpB through an intramembrane tunnel. The sequence is that of Potassium-transporting ATPase potassium-binding subunit from Escherichia coli O6:H1 (strain CFT073 / ATCC 700928 / UPEC).